Reading from the N-terminus, the 344-residue chain is MDRQKALEAAVSQIERAFGKGSIMKLGGKDQVVETEVVSTRILGLDVALGIGGVPRGRIIEVYGPESSGKTTLALHIIAEAQKKGGTCAFVDAEHALDPSYARKLGALDELLISEPDAGEQALEIADTLVRPGAVDVLVVDSVAALVPRGELEGEMGDNHMGLHARLMSQALRKLTGSVSKSKTIVIFINQIRMKIGVMFGNPETTTGGNALKFYASVRMEIRRVGAIKDRDEVVGNQTRVKVVKNKLAPPFKVVDFDIMYGEGISKMGELIDLGVKANVVKKSGAWFSYNSTRIGQGRENAKQFLRDNPAMAAEIEGAIRQNAGLISEALAAVPDLDGTPVAE.

64–71 (GPESSGKT) serves as a coordination point for ATP.

The protein belongs to the RecA family.

It localises to the cytoplasm. In terms of biological role, can catalyze the hydrolysis of ATP in the presence of single-stranded DNA, the ATP-dependent uptake of single-stranded DNA by duplex DNA, and the ATP-dependent hybridization of homologous single-stranded DNAs. It interacts with LexA causing its activation and leading to its autocatalytic cleavage. The polypeptide is Protein RecA (Paramagnetospirillum magnetotacticum (Aquaspirillum magnetotacticum)).